We begin with the raw amino-acid sequence, 560 residues long: Protein yellow (560 aa).

The signal sequence occupies residues 1 to 30 (MHVQDKGGIGALTALSLLLVAVTMVTPTQA). N-linked (GlcNAc...) asparagine glycans are attached at residues Asn-153 and Asn-224. The disordered stretch occupies residues 452–492 (QYRPVLPQKPQTSWGPSPPSRSYLPSLGASPGGPGQVVSSV). The span at 471 to 480 (SRSYLPSLGA) shows a compositional bias: low complexity.

Belongs to the major royal jelly protein family.

Its subcellular location is the secreted. In terms of biological role, controls the pigmentation pattern of the adult cuticle and larval mouth parts. The polypeptide is Protein yellow (y) (Drosophila pseudoobscura pseudoobscura (Fruit fly)).